A 164-amino-acid polypeptide reads, in one-letter code: NADH-quinone oxidoreductase subunit I (164 aa).

2 consecutive 4Fe-4S ferredoxin-type domains span residues 55–85 (LRRYPNGEERCIACKLCEAICPAQAITIDAE) and 95–124 (TRYDIDMTKCIYCGFCQEACPVDAIVEGPN). Positions 65, 68, 71, 75, 104, 107, 110, and 114 each coordinate [4Fe-4S] cluster.

This sequence belongs to the complex I 23 kDa subunit family. As to quaternary structure, NDH-1 is composed of 14 different subunits. Subunits NuoA, H, J, K, L, M, N constitute the membrane sector of the complex. The cofactor is [4Fe-4S] cluster.

It is found in the cell inner membrane. It carries out the reaction a quinone + NADH + 5 H(+)(in) = a quinol + NAD(+) + 4 H(+)(out). In terms of biological role, NDH-1 shuttles electrons from NADH, via FMN and iron-sulfur (Fe-S) centers, to quinones in the respiratory chain. The immediate electron acceptor for the enzyme in this species is believed to be ubiquinone. Couples the redox reaction to proton translocation (for every two electrons transferred, four hydrogen ions are translocated across the cytoplasmic membrane), and thus conserves the redox energy in a proton gradient. This chain is NADH-quinone oxidoreductase subunit I, found in Dinoroseobacter shibae (strain DSM 16493 / NCIMB 14021 / DFL 12).